A 205-amino-acid polypeptide reads, in one-letter code: Outer-membrane lipoprotein carrier protein (205 aa).

Residues 1-19 (MKKIIICFIFVFSINVSFA) form the signal peptide.

It belongs to the LolA family. Monomer.

Its subcellular location is the periplasm. Its function is as follows. Participates in the translocation of lipoproteins from the inner membrane to the outer membrane. Only forms a complex with a lipoprotein if the residue after the N-terminal Cys is not an aspartate (The Asp acts as a targeting signal to indicate that the lipoprotein should stay in the inner membrane). This Francisella tularensis subsp. tularensis (strain FSC 198) protein is Outer-membrane lipoprotein carrier protein.